Here is a 549-residue protein sequence, read N- to C-terminus: uncharacterized protein (549 aa).

A run of 12 helical transmembrane segments spans residues 27–47 (ILRFAIPTFFFALFSAAYVFV), 108–128 (PIVVILNAITIFVPLGTGVIF), 146–166 (TGLVSTTLFALVTQIIVLAIA), 197–217 (AVAIGSEYVYILIGFNIIPML), 233–253 (FIAIVPPLSNLLNVLFVFLLV), 265–285 (VAAILVYFITFMAYVVYLISL), 308–328 (FLVISMVGLASFFRNGSLSIL), 352–372 (LVLLTGPIAIANLTSAAIFGV), 399–419 (TLLVCLVFAALLYLILAVGLG), 434–454 (LMLANQFSLIVQAQVFFVAIG), 472–492 (IVSLMQGVIVFVPLLFIFQAI), and 501–521 (IFIWLLTANAALAGLINVLIG).

It is found in the cell membrane. This is an uncharacterized protein from Mycoplasma pneumoniae (strain ATCC 29342 / M129 / Subtype 1) (Mycoplasmoides pneumoniae).